A 74-amino-acid chain; its full sequence is Exodeoxyribonuclease 7 small subunit (74 aa).

Belongs to the XseB family. As to quaternary structure, heterooligomer composed of large and small subunits.

The protein resides in the cytoplasm. It carries out the reaction Exonucleolytic cleavage in either 5'- to 3'- or 3'- to 5'-direction to yield nucleoside 5'-phosphates.. Functionally, bidirectionally degrades single-stranded DNA into large acid-insoluble oligonucleotides, which are then degraded further into small acid-soluble oligonucleotides. The sequence is that of Exodeoxyribonuclease 7 small subunit from Synechococcus elongatus (strain ATCC 33912 / PCC 7942 / FACHB-805) (Anacystis nidulans R2).